Reading from the N-terminus, the 616-residue chain is Dihydroxy-acid dehydratase (616 aa).

Position 81 (D81) interacts with Mg(2+). C122 is a binding site for [2Fe-2S] cluster. D123 and K124 together coordinate Mg(2+). K124 is subject to N6-carboxylysine. Residue C195 participates in [2Fe-2S] cluster binding. E491 is a Mg(2+) binding site. The active-site Proton acceptor is the S517.

It belongs to the IlvD/Edd family. As to quaternary structure, homodimer. [2Fe-2S] cluster serves as cofactor. Requires Mg(2+) as cofactor.

It carries out the reaction (2R)-2,3-dihydroxy-3-methylbutanoate = 3-methyl-2-oxobutanoate + H2O. It catalyses the reaction (2R,3R)-2,3-dihydroxy-3-methylpentanoate = (S)-3-methyl-2-oxopentanoate + H2O. Its pathway is amino-acid biosynthesis; L-isoleucine biosynthesis; L-isoleucine from 2-oxobutanoate: step 3/4. The protein operates within amino-acid biosynthesis; L-valine biosynthesis; L-valine from pyruvate: step 3/4. Its function is as follows. Functions in the biosynthesis of branched-chain amino acids. Catalyzes the dehydration of (2R,3R)-2,3-dihydroxy-3-methylpentanoate (2,3-dihydroxy-3-methylvalerate) into 2-oxo-3-methylpentanoate (2-oxo-3-methylvalerate) and of (2R)-2,3-dihydroxy-3-methylbutanoate (2,3-dihydroxyisovalerate) into 2-oxo-3-methylbutanoate (2-oxoisovalerate), the penultimate precursor to L-isoleucine and L-valine, respectively. This is Dihydroxy-acid dehydratase from Salmonella typhi.